A 221-amino-acid polypeptide reads, in one-letter code: uncharacterized protein (221 aa).

An N-terminal signal peptide occupies residues Met-1–Val-18.

This is an uncharacterized protein from Aquifex aeolicus (strain VF5).